The sequence spans 863 residues: Leucine--tRNA ligase (863 aa).

Residues 42 to 52 (PYPSGKIHMGH) carry the 'HIGH' region motif. The 'KMSKS' region signature appears at 618 to 622 (KMSKS). Residue Lys621 participates in ATP binding.

The protein belongs to the class-I aminoacyl-tRNA synthetase family.

The protein resides in the cytoplasm. It catalyses the reaction tRNA(Leu) + L-leucine + ATP = L-leucyl-tRNA(Leu) + AMP + diphosphate. The protein is Leucine--tRNA ligase of Desulforapulum autotrophicum (strain ATCC 43914 / DSM 3382 / VKM B-1955 / HRM2) (Desulfobacterium autotrophicum).